Here is a 330-residue protein sequence, read N- to C-terminus: MISFSSFYKQIADSSLQHWLETLPAILGQWQREHKHGTLPKWEKVLNKLHYPTPDIIDLKNSVSIGSGQQLAKGEREKLENLLRIFQPWRKGPFSVHGIDIDTEWRSDWKWERILPHLSPLNNRTVLDVGCGSGYHMWRMLGEGAKHVVGIDPSTLFLCQFEAIKRLAGDHHPVHLLPLGIEELPPLDAFDTVFSMGVLYHRRSPIDHLLQLRDQLRTGGELVLETLVIDGDENTVLVPEDRYGKMNNVWFLPSAAALELWLKKADFIDIKCVDIDVTSLAEQRSTDWMPNESLVDYLDPTNVDLTVEGYPAPKRATFIATKNQPNKDLT.

Carboxy-S-adenosyl-L-methionine is bound by residues lysine 91, tryptophan 105, lysine 110, glycine 130, 152–154 (DPS), 181–182 (IE), methionine 196, tyrosine 200, and arginine 315.

It belongs to the class I-like SAM-binding methyltransferase superfamily. CmoB family. As to quaternary structure, homotetramer.

The catalysed reaction is carboxy-S-adenosyl-L-methionine + 5-hydroxyuridine(34) in tRNA = 5-carboxymethoxyuridine(34) in tRNA + S-adenosyl-L-homocysteine + H(+). Its function is as follows. Catalyzes carboxymethyl transfer from carboxy-S-adenosyl-L-methionine (Cx-SAM) to 5-hydroxyuridine (ho5U) to form 5-carboxymethoxyuridine (cmo5U) at position 34 in tRNAs. This chain is tRNA U34 carboxymethyltransferase, found in Shewanella sediminis (strain HAW-EB3).